We begin with the raw amino-acid sequence, 346 residues long: Uroporphyrinogen decarboxylase (346 aa).

Substrate contacts are provided by residues Arg-23–Arg-27, Asp-73, Tyr-151, Ser-206, and His-321.

It belongs to the uroporphyrinogen decarboxylase family. Homodimer.

The protein resides in the cytoplasm. The catalysed reaction is uroporphyrinogen III + 4 H(+) = coproporphyrinogen III + 4 CO2. Its pathway is porphyrin-containing compound metabolism; protoporphyrin-IX biosynthesis; coproporphyrinogen-III from 5-aminolevulinate: step 4/4. Catalyzes the decarboxylation of four acetate groups of uroporphyrinogen-III to yield coproporphyrinogen-III. The protein is Uroporphyrinogen decarboxylase of Aliarcobacter butzleri (strain RM4018) (Arcobacter butzleri).